The chain runs to 391 residues: Ectodysplasin-A (391 aa).

The span at 1-21 shows a compositional bias: basic and acidic residues; that stretch reads MGYPEVERREPLPAAAPRERG. The disordered stretch occupies residues 1 to 28; sequence MGYPEVERREPLPAAAPRERGSQGCGCR. At 1-41 the chain is on the cytoplasmic side; sequence MGYPEVERREPLPAAAPRERGSQGCGCRGAPARAGEGNSCR. A helical; Signal-anchor for type II membrane protein membrane pass occupies residues 42 to 62; it reads LFLGFFGLSLALHLLTLCCYL. The Extracellular portion of the chain corresponds to 63-391; that stretch reads ELRSELRRER…AIRLGEAPAS (329 aa). Disordered stretches follow at residues 73-130 and 145-245; these read GAES…SQDG and SYSE…GTRE. Low complexity predominate over residues 76–96; sequence SRFSGPGTPGTSGTLSSPGGL. The region spanning 180-229 is the Collagen-like domain; the sequence is GPPGPNGPPGPPGPPGPQGPPGIPGIPGIPGTTVMGPPGPPGPPGPQGPP. Pro residues-rich tracts occupy residues 181 to 203 and 216 to 228; these read PPGPNGPPGPPGPPGPQGPPGIP and PPGPPGPPGPQGP. In terms of domain architecture, THD spans 249 to 385; it reads AVVHLQGQGS…HTTFFGAIRL (137 aa). A glycan (N-linked (GlcNAc...) asparagine) is linked at asparagine 313. Cysteine 332 and cysteine 346 are oxidised to a cystine. An N-linked (GlcNAc...) asparagine glycan is attached at asparagine 372.

Belongs to the tumor necrosis factor family. Homotrimer. The homotrimers may then dimerize and form higher-order oligomers. N-glycosylated. In terms of processing, processing by furin produces a secreted form.

The protein localises to the cell membrane. The protein resides in the secreted. Functionally, cytokine which is involved in epithelial-mesenchymal signaling during morphogenesis of ectodermal organs. Functions as a ligand activating the DEATH-domain containing receptors EDAR and EDA2R. Isoform A1 binds only to the receptor EDAR, while isoform A2 binds exclusively to the receptor EDA2R. May also play a role in cell adhesion. Its function is as follows. Isoform A1 binds only to the receptor EDAR, while isoform A2 binds exclusively to the receptor EDA2R. In terms of biological role, isoform A2 binds exclusively to the receptor EDA2R. The chain is Ectodysplasin-A (EDA) from Bos taurus (Bovine).